The primary structure comprises 241 residues: Biosynthetic peptidoglycan transglycosylase (241 aa).

A helical membrane pass occupies residues 18 to 38 (GVIGIIALWMAGILIFAFLPV).

This sequence belongs to the glycosyltransferase 51 family.

It localises to the cell inner membrane. It catalyses the reaction [GlcNAc-(1-&gt;4)-Mur2Ac(oyl-L-Ala-gamma-D-Glu-L-Lys-D-Ala-D-Ala)](n)-di-trans,octa-cis-undecaprenyl diphosphate + beta-D-GlcNAc-(1-&gt;4)-Mur2Ac(oyl-L-Ala-gamma-D-Glu-L-Lys-D-Ala-D-Ala)-di-trans,octa-cis-undecaprenyl diphosphate = [GlcNAc-(1-&gt;4)-Mur2Ac(oyl-L-Ala-gamma-D-Glu-L-Lys-D-Ala-D-Ala)](n+1)-di-trans,octa-cis-undecaprenyl diphosphate + di-trans,octa-cis-undecaprenyl diphosphate + H(+). The protein operates within cell wall biogenesis; peptidoglycan biosynthesis. Peptidoglycan polymerase that catalyzes glycan chain elongation from lipid-linked precursors. The protein is Biosynthetic peptidoglycan transglycosylase of Yersinia pseudotuberculosis serotype O:3 (strain YPIII).